A 246-amino-acid polypeptide reads, in one-letter code: Probable phosphatase Ssed_2939 (246 aa).

9 residues coordinate Zn(2+): H8, H10, H16, H41, E74, H102, H132, D193, and H195.

Belongs to the PHP family. Zn(2+) serves as cofactor.

This is Probable phosphatase Ssed_2939 from Shewanella sediminis (strain HAW-EB3).